A 547-amino-acid chain; its full sequence is Chaperonin GroEL (547 aa).

ATP contacts are provided by residues 30–33 (TLGP), Lys-51, 87–91 (DGTTT), Gly-415, and Asp-496. Residues 525 to 547 (KPEPKSPAGGPGMGGMGGMDGMM) form a disordered region. Residues 533–547 (GGPGMGGMGGMDGMM) are compositionally biased toward gly residues.

Belongs to the chaperonin (HSP60) family. Forms a cylinder of 14 subunits composed of two heptameric rings stacked back-to-back. Interacts with the co-chaperonin GroES.

The protein resides in the cytoplasm. The catalysed reaction is ATP + H2O + a folded polypeptide = ADP + phosphate + an unfolded polypeptide.. Together with its co-chaperonin GroES, plays an essential role in assisting protein folding. The GroEL-GroES system forms a nano-cage that allows encapsulation of the non-native substrate proteins and provides a physical environment optimized to promote and accelerate protein folding. This Cereibacter sphaeroides (strain ATCC 17029 / ATH 2.4.9) (Rhodobacter sphaeroides) protein is Chaperonin GroEL.